Consider the following 94-residue polypeptide: Neutrophil antibiotic peptide NP-2 (94 aa).

A signal peptide spans 1–19 (MRTLTLLTALLLLALHTQA). Positions 20-62 (KSPQGTAEEAPDQEQLVMEDQDISISFGGDKGTALQDADVKAG) are excised as a propeptide. 3 disulfide bridges follow: cysteine 65/cysteine 93, cysteine 67/cysteine 82, and cysteine 72/cysteine 92.

The protein belongs to the alpha-defensin family. In terms of tissue distribution, highest expression in bone marrow and to a much lesser extent in small intestine.

It is found in the secreted. Its function is as follows. Active in vitro against S.aureus, fungi, Gram-positive and Gram-negative bacteria and to a lesser extent against an enveloped virus. This chain is Neutrophil antibiotic peptide NP-2 (Defa), found in Rattus norvegicus (Rat).